The chain runs to 1134 residues: Mediator of RNA polymerase II transcription subunit 12 (1134 aa).

Belongs to the Mediator complex subunit 12 family. As to quaternary structure, component of the srb8-11 complex which consists of rb8, srb9(TRAP240), srb10 and srb11. The srb8-11 complex associates with the Mediator complex thereby blocking association with RNA polymerase II and leading to reduced transcriptional activation by Mediator.

Its subcellular location is the nucleus. Component of the srb8-11 complex. The srb8-11 complex is a regulatory module of the Mediator complex which is itself involved in regulation of basal and activated RNA polymerase II-dependent transcription. The srb8-11 complex may be involved in the transcriptional repression of a subset of genes regulated by Mediator. It may inhibit the association of the Mediator complex with RNA polymerase II to form the holoenzyme complex. This Schizosaccharomyces pombe (strain 972 / ATCC 24843) (Fission yeast) protein is Mediator of RNA polymerase II transcription subunit 12 (srb8).